A 346-amino-acid polypeptide reads, in one-letter code: Coproporphyrin III ferrochelatase (346 aa).

Residues serine 52 and tyrosine 121 each coordinate Fe-coproporphyrin III. 2 residues coordinate Fe(2+): histidine 181 and glutamate 264.

Belongs to the ferrochelatase family.

The protein resides in the cytoplasm. The catalysed reaction is Fe-coproporphyrin III + 2 H(+) = coproporphyrin III + Fe(2+). It participates in porphyrin-containing compound metabolism; protoheme biosynthesis. Its function is as follows. Involved in coproporphyrin-dependent heme b biosynthesis. Catalyzes the insertion of ferrous iron into coproporphyrin III to form Fe-coproporphyrin III. The sequence is that of Coproporphyrin III ferrochelatase from Mycobacterium sp. (strain KMS).